The chain runs to 828 residues: DNA gyrase subunit A (828 aa).

Residues 38–501 enclose the Topo IIA-type catalytic domain; sequence LPDARDGLKP…SYESIDTEDL (464 aa). Catalysis depends on Y126, which acts as the O-(5'-phospho-DNA)-tyrosine intermediate. Residues 528–534 carry the GyrA-box motif; it reads QNRGGKG.

It belongs to the type II topoisomerase GyrA/ParC subunit family. Heterotetramer, composed of two GyrA and two GyrB chains. In the heterotetramer, GyrA contains the active site tyrosine that forms a transient covalent intermediate with DNA, while GyrB binds cofactors and catalyzes ATP hydrolysis.

It is found in the cytoplasm. It catalyses the reaction ATP-dependent breakage, passage and rejoining of double-stranded DNA.. In terms of biological role, a type II topoisomerase that negatively supercoils closed circular double-stranded (ds) DNA in an ATP-dependent manner to modulate DNA topology and maintain chromosomes in an underwound state. Negative supercoiling favors strand separation, and DNA replication, transcription, recombination and repair, all of which involve strand separation. Also able to catalyze the interconversion of other topological isomers of dsDNA rings, including catenanes and knotted rings. Type II topoisomerases break and join 2 DNA strands simultaneously in an ATP-dependent manner. This is DNA gyrase subunit A from Helicobacter pylori (strain J99 / ATCC 700824) (Campylobacter pylori J99).